The primary structure comprises 402 residues: MAEISGLPDDLLVKILAFLPTKVAISTSVLSKQWRFLWMWLPKLKYDDYDDITDGFNSVSAFQTYRDFIAKNLPLHRAPIIESLSLGFRCGTLQPEDLKSWVEVAVSRSVRELSILAYYRNNYALSSSSLYTCKSLVTLKGFNIRVDVPPTVCLLPSLRTLELKRVRYLNEDSLRMLLSFCPVLEYLSIERHDNDNLRGLVVDVPSLRRLSLTSYTGCSSDDYVIVTPSLKYFKAFDYRSEISSYKIEKIPELEEADISIERNPEKLFVYFKSIKCLSLQVDFNSKEEPGYDSGIVFNHLEELTPYINDANWSKLLFRLLNDSPKLRVLEISNSKSFYKEKIGEYLPVSWSKNQGSVPKCFLNSLETFRVKWYYSEEQEDRDFLSLIFKHARCLKSTSILHR.

An F-box domain is found at 1–47; the sequence is MAEISGLPDDLLVKILAFLPTKVAISTSVLSKQWRFLWMWLPKLKYD. Positions 349–401 constitute an FBD domain; the sequence is SWSKNQGSVPKCFLNSLETFRVKWYYSEEQEDRDFLSLIFKHARCLKSTSILH.

The polypeptide is Putative FBD-associated F-box protein At5g56690 (Arabidopsis thaliana (Mouse-ear cress)).